Reading from the N-terminus, the 185-residue chain is Adenylyl-sulfate kinase (185 aa).

ATP is bound at residue Gly-13–Thr-20. The active-site Phosphoserine intermediate is Ser-87.

Belongs to the APS kinase family.

It catalyses the reaction adenosine 5'-phosphosulfate + ATP = 3'-phosphoadenylyl sulfate + ADP + H(+). It participates in sulfur metabolism; hydrogen sulfide biosynthesis; sulfite from sulfate: step 2/3. In terms of biological role, catalyzes the synthesis of activated sulfate. This is Adenylyl-sulfate kinase from Halothermothrix orenii (strain H 168 / OCM 544 / DSM 9562).